The following is a 325-amino-acid chain: RNA ligase 1 (325 aa).

Requires Mg(2+) as cofactor. It depends on Mn(2+) as a cofactor. Post-translationally, AMPylates itself (auto-AMPylation).

It carries out the reaction ATP + (ribonucleotide)n-3'-hydroxyl + 5'-phospho-(ribonucleotide)m = (ribonucleotide)n+m + AMP + diphosphate.. Functionally, functions as an RNA ligase, in vitro. The ligation reaction entails three nucleotidyl transfer steps. In the first step, the RNA ligase reacts with ATP in the absence of nucleic acid to form a covalent ligase-AMP intermediate and release pyrophosphate. In step 2, the ligase-AMP binds to the nucleic acid and transfers the adenylate to the 5'-PO4 terminus to form an adenylylated intermediate. In step 3, the RNA ligase directs the attack of the 3'-OH on the 5'-phosphoanhydride linkage, resulting in a repaired 3'-5' phosphodiester and release of AMP. Exhibits selectivity for single-stranded RNA substrates and may not have nick-sealing activity on double-stranded DNA-RNA hybrids. May play a role in maintaining RNA integrity under stress conditions, for example in response to reactive oxygen species (ROS). This chain is RNA ligase 1, found in Danio rerio (Zebrafish).